The chain runs to 505 residues: Deoxyguanosinetriphosphate triphosphohydrolase (505 aa).

Residues 66–273 (RLTHSMEVQQ…MEAADDISYC (208 aa)) form the HD domain.

The protein belongs to the dGTPase family. Type 1 subfamily. As to quaternary structure, homotetramer. It depends on Mg(2+) as a cofactor.

It carries out the reaction dGTP + H2O = 2'-deoxyguanosine + triphosphate + H(+). Functionally, dGTPase preferentially hydrolyzes dGTP over the other canonical NTPs. The sequence is that of Deoxyguanosinetriphosphate triphosphohydrolase from Escherichia coli O127:H6 (strain E2348/69 / EPEC).